The sequence spans 104 residues: Cytochrome c6 (104 aa).

The first 20 residues, 1-20, serve as a signal peptide directing secretion; the sequence is MKSLLTFILTTIFCIQQVWA. Heme c is bound by residues cysteine 34, cysteine 37, histidine 38, and methionine 78.

The protein belongs to the cytochrome c family. PetJ subfamily. As to quaternary structure, monomer. In terms of processing, binds 1 heme c group covalently per subunit.

The protein resides in the plastid. It is found in the chloroplast thylakoid lumen. Its function is as follows. Functions as an electron carrier between membrane-bound cytochrome b6-f and photosystem I in oxygenic photosynthesis. This chain is Cytochrome c6, found in Cyanidioschyzon merolae (strain NIES-3377 / 10D) (Unicellular red alga).